Consider the following 178-residue polypeptide: C-phycoerythrin class 2 subunit beta (178 aa).

Residues Cys50 and Cys61 each coordinate phycourobilin. (2R,3E)-phycoerythrobilin contacts are provided by Cys82 and Cys159.

This sequence belongs to the phycobiliprotein family. Heterodimer of an alpha and a beta chain. In terms of processing, contains two covalently linked phycoerythrobilin chromophores and one covalently linked phycourobilin chromophore.

It localises to the cellular thylakoid membrane. In terms of biological role, light-harvesting photosynthetic bile pigment-protein from the phycobiliprotein complex. The protein is C-phycoerythrin class 2 subunit beta (mpeB) of Synechococcus sp. (strain WH8020).